Here is a 60-residue protein sequence, read N- to C-terminus: Metallothionein (60 aa).

A beta region spans residues 1–28 (MDPCECSKGGTCNCGGSCTCTNCSCTTC). A divalent metal cation contacts are provided by cysteine 4, cysteine 6, cysteine 12, cysteine 14, cysteine 18, cysteine 20, cysteine 23, cysteine 25, cysteine 28, cysteine 32, cysteine 33, cysteine 35, cysteine 36, cysteine 40, cysteine 43, cysteine 47, cysteine 49, cysteine 54, cysteine 58, and cysteine 59. The segment at 29-60 (KKSCCPCCPSGCPKCASGCVCKGKTCDAACCQ) is alpha.

The protein belongs to the metallothionein superfamily. Type 1 family.

Its function is as follows. Metallothioneins have a high content of cysteine residues that bind various heavy metals. This chain is Metallothionein (mt), found in Perca fluviatilis (European perch).